A 131-amino-acid chain; its full sequence is Small ribosomal subunit protein uS8 (131 aa).

It belongs to the universal ribosomal protein uS8 family. In terms of assembly, part of the 30S ribosomal subunit. Contacts proteins S5 and S12.

Its function is as follows. One of the primary rRNA binding proteins, it binds directly to 16S rRNA central domain where it helps coordinate assembly of the platform of the 30S subunit. In Mycoplasmopsis agalactiae (strain NCTC 10123 / CIP 59.7 / PG2) (Mycoplasma agalactiae), this protein is Small ribosomal subunit protein uS8.